Here is a 378-residue protein sequence, read N- to C-terminus: Deoxyguanosinetriphosphate triphosphohydrolase-like protein (378 aa).

The tract at residues 1 to 28 (MLAPYACQPGESRGRQQPESMSTFRSPF) is disordered. The segment covering 15 to 26 (RQQPESMSTFRS) has biased composition (polar residues). The region spanning 62–198 (RLTHSIEVAQ…AAIADDVAYS (137 aa)) is the HD domain.

Belongs to the dGTPase family. Type 2 subfamily.

The chain is Deoxyguanosinetriphosphate triphosphohydrolase-like protein from Cereibacter sphaeroides (strain ATCC 17025 / ATH 2.4.3) (Rhodobacter sphaeroides).